The sequence spans 194 residues: Prefoldin subunit 3 (194 aa).

Belongs to the prefoldin subunit alpha family. Heterohexamer of two PFD-alpha type and four PFD-beta type subunits. Interacts with itself. Interacts with Vhl and betaTub56D/tubulin beta-1 chain. Interacts with tubulin alpha-beta heterodimers by itself or in complex with Vhl. Does not interact with microtubules (MTs). As to expression, expressed in larval central nervous system (CNS) and pupal testis (at protein level).

Its subcellular location is the cytoplasm. Binds specifically to cytosolic chaperonin (c-CPN) and transfers target proteins to it. Binds to nascent polypeptide chain and promotes folding in an environment in which there are many competing pathways for nonnative proteins. Required for tubulin stability and spindle and centrosome formation in cooperation with Vhl. The sequence is that of Prefoldin subunit 3 (mgr) from Drosophila melanogaster (Fruit fly).